The following is a 1726-amino-acid chain: Transcription elongation factor SPT6 (1726 aa).

3 stretches are compositionally biased toward acidic residues: residues Met1 to Glu18, Glu31 to Asp45, and Asp55 to Gly79. 3 disordered regions span residues Met1–Lys196, Ala219–Thr248, and Glu482–Arg512. Ser90 is subject to Phosphoserine. The span at Asp93–Glu104 shows a compositional bias: acidic residues. The span at Lys110–Arg120 shows a compositional bias: basic residues. 4 stretches are compositionally biased toward acidic residues: residues Gly146 to Ala157, Asp166 to Gly186, Ala219 to Ser240, and Ser484 to Glu501. A compositionally biased stretch (basic and acidic residues) spans Gln502–Arg512. A coiled-coil region spans residues Leu806–Asn865. In terms of domain architecture, S1 motif spans Trp1204–Arg1273. Residues Tyr1316–Cys1426 form the SH2 domain. A Phosphothreonine modification is found at Thr1522. Phosphoserine is present on Ser1525. Residues Leu1611–Met1627 show a composition bias toward polar residues. The tract at residues Leu1611–Arg1726 is disordered. 2 stretches are compositionally biased toward low complexity: residues Thr1628 to Ser1640 and Ser1647 to Ser1656. The span at Arg1657–Thr1669 shows a compositional bias: polar residues.

The protein belongs to the SPT6 family.

It localises to the nucleus. In terms of biological role, histone H3-H4 chaperone that plays a role in maintenance of chromatin structure during RNA polymerase II transcription elongation. Promotes the activation of the myogenic gene program by entailing erasure of the repressive H3K27me3 epigenetic mark through stabilization of the chromatin interaction of the H3K27 demethylase KDM6A. Plays an important role during early patterning and somitogenesis of the embryo. The polypeptide is Transcription elongation factor SPT6 (supt6h) (Danio rerio (Zebrafish)).